Consider the following 458-residue polypeptide: Paired box protein Pax-8 (458 aa).

A DNA-binding region (paired) is located at residues 18 to 144 (GHGGLNQLGG…SSINRIIRTK (127 aa)). The interval 21 to 77 (GLNQLGGAFVNGRPLPEVVRQRIVDLAHQGVRPCDISRQLRVSHGCVSKILGRYYET) is PAI subdomain. The segment at 96-144 (KVVEKIGDYKRQNPTMFAWEIRDRLLAEGVCDNDTVPSVSSINRIIRTK) is RED subdomain. Residues 198-217 (PGADGKRKLDDSDQESCRLS) are disordered.

It is found in the nucleus. In terms of biological role, probable transcription factor. Involved in kidney development, acting synergistically with lhx1/lim-1 to establish the pronephric primordium in late gastrulae/early neurulae. This Xenopus tropicalis (Western clawed frog) protein is Paired box protein Pax-8.